Here is a 409-residue protein sequence, read N- to C-terminus: Argininosuccinate synthase (409 aa).

ATP is bound by residues 11-19 and Ala-38; that span reads AYSGGLDTS. L-citrulline contacts are provided by Tyr-91 and Ser-96. An ATP-binding site is contributed by Gly-121. L-aspartate-binding residues include Thr-123, Asn-127, and Asp-128. Asn-127 is a binding site for L-citrulline. L-citrulline-binding residues include Arg-131, Ser-182, Ser-191, Glu-267, and Tyr-279.

The protein belongs to the argininosuccinate synthase family. Type 1 subfamily. As to quaternary structure, homotetramer.

Its subcellular location is the cytoplasm. It catalyses the reaction L-citrulline + L-aspartate + ATP = 2-(N(omega)-L-arginino)succinate + AMP + diphosphate + H(+). Its pathway is amino-acid biosynthesis; L-arginine biosynthesis; L-arginine from L-ornithine and carbamoyl phosphate: step 2/3. This chain is Argininosuccinate synthase, found in Nitrobacter hamburgensis (strain DSM 10229 / NCIMB 13809 / X14).